Consider the following 464-residue polypeptide: 17,18-epoxy-17-hydroxycur-19-ene N-malonyltransferase (464 aa).

Residues H191 and D403 each act as proton acceptor in the active site.

Belongs to the plant acyltransferase family. Monomer. Mainly expressed in roots.

Its subcellular location is the cytoplasm. It catalyses the reaction 17,18-epoxy-17-hydroxycur-19-ene + malonyl-CoA = prestrychnine + CoA. Its pathway is alkaloid biosynthesis. Its function is as follows. Malonylransferase involved in the biosynthesis of curare monoterpene indole alkaloids (MIAs), natural products such as strychnine, a neurotoxic compound used as a pesticide to control rodents, and its pharmacologically active derivatives, including brucine, used to regulate blood pressure. Curare alkaloids act as animal glycine receptor antagonists. Catalyzes the conversion of 17,18-epoxy-17-hydroxycur-19-ene (Wieland-Gumlich aldehyde) to prestrychnine, which is spontaneously converted into strychnine and isostrychnine. This chain is 17,18-epoxy-17-hydroxycur-19-ene N-malonyltransferase, found in Strychnos nux-vomica (Poison nut).